Consider the following 505-residue polypeptide: MAAAAAFFCALLFISVQHGVLGGYTRNDFPADFVFGAATSAYQYEGAAAEDGRGASIWDTFTHAGKMKDKSTGDVASDGYHKYKGDVKLMTETGLEAYRFSISWSRLIPSGRGAVNQQGLKYYNNIIDELTKRGIQVHVMLYHLDLPQALEDEYAGWLSPRIVEDFTAYADVCFREFGDRVSHWTILAEPNVAALGGYDTGEFAPGRCSDPFGVTKCTVGNSSVEPYVAAHNMILTHAAVVRLYREKYQTLQKGIVGINVLSLWSYPLTDSTADLQAAQRYKDFTYGWILHPLVFGDYPQVMKKAIGSRLPSFSKVQTELVKGTLDFIGVNHYFSLYVSDLPLAKGVRDFIADRSVSCRGLLQGVRFIAQTMQAPTRSMGDPHGLQLMLQHLKESYGDLPIYVQENGKYRKASSNDSLDDTDRVDYIKGYIEGVLNATRNGVNARGYFAWFFVDMFELLSGYQTRYGLYRVDFDDAALPRRAKRSARWYRDFLKSKRQPLQIAQQ.

The signal sequence occupies residues Met-1–Gly-22. Positions 43 and 143 each coordinate a beta-D-glucoside. Residue Glu-189 is the Proton donor of the active site. The cysteines at positions 208 and 217 are disulfide-linked. N-linked (GlcNAc...) asparagine glycosylation occurs at Asn-221. Positions 333 and 405 each coordinate a beta-D-glucoside. Glu-405 (nucleophile) is an active-site residue. Residues Asn-415 and Asn-436 are each glycosylated (N-linked (GlcNAc...) asparagine). The a beta-D-glucoside site is built by Trp-450 and Tyr-466.

This sequence belongs to the glycosyl hydrolase 1 family.

It carries out the reaction Hydrolysis of terminal, non-reducing beta-D-glucosyl residues with release of beta-D-glucose.. In Oryza sativa subsp. japonica (Rice), this protein is Beta-glucosidase 3 (BGLU3).